The following is a 154-amino-acid chain: 6,7-dimethyl-8-ribityllumazine synthase (154 aa).

Residues tryptophan 23, 57 to 59 (AFE), and 81 to 83 (AVI) contribute to the 5-amino-6-(D-ribitylamino)uracil site. 86 to 87 (AT) lines the (2S)-2-hydroxy-3-oxobutyl phosphate pocket. Catalysis depends on histidine 89, which acts as the Proton donor. Phenylalanine 114 contributes to the 5-amino-6-(D-ribitylamino)uracil binding site. Arginine 128 contacts (2S)-2-hydroxy-3-oxobutyl phosphate.

This sequence belongs to the DMRL synthase family.

The catalysed reaction is (2S)-2-hydroxy-3-oxobutyl phosphate + 5-amino-6-(D-ribitylamino)uracil = 6,7-dimethyl-8-(1-D-ribityl)lumazine + phosphate + 2 H2O + H(+). It participates in cofactor biosynthesis; riboflavin biosynthesis; riboflavin from 2-hydroxy-3-oxobutyl phosphate and 5-amino-6-(D-ribitylamino)uracil: step 1/2. Catalyzes the formation of 6,7-dimethyl-8-ribityllumazine by condensation of 5-amino-6-(D-ribitylamino)uracil with 3,4-dihydroxy-2-butanone 4-phosphate. This is the penultimate step in the biosynthesis of riboflavin. This Sulfurimonas denitrificans (strain ATCC 33889 / DSM 1251) (Thiomicrospira denitrificans (strain ATCC 33889 / DSM 1251)) protein is 6,7-dimethyl-8-ribityllumazine synthase.